We begin with the raw amino-acid sequence, 378 residues long: 1-acyl-sn-glycerol-3-phosphate acyltransferase delta (378 aa).

The helical transmembrane segment at 11–31 threads the bilayer; it reads FLCHLVFCYVFIASGLIINTI. The HXXXXD motif motif lies at 96 to 101; sequence HKFEID. A run of 3 helical transmembrane segments spans residues 125–145, 307–327, and 338–358; these read ELAYVPIIGWMWYFTEMVFCS, TLVNWLFWASLVLYPFFQFLV, and LASFILVFFVASVGVRWMIGV.

It belongs to the 1-acyl-sn-glycerol-3-phosphate acyltransferase family. In terms of tissue distribution, widely expressed with highest levels in skeletal muscle, followed by heart, liver, prostate and thymus.

It is found in the endoplasmic reticulum membrane. It catalyses the reaction a 1-acyl-sn-glycero-3-phosphate + an acyl-CoA = a 1,2-diacyl-sn-glycero-3-phosphate + CoA. It carries out the reaction (4Z,7Z,10Z,13Z,16Z,19Z)-docosahexaenoyl-CoA + 1-hexadecanoyl-sn-glycero-3-phosphate = 1-hexadecanoyl-2-(4Z,7Z,10Z,13Z,16Z,19Z-docosahexaenoyl)-sn-glycero-3-phosphate + CoA. The catalysed reaction is 1-octadecanoyl-sn-glycero-3-phosphate + (9Z,12Z)-octadecadienoyl-CoA = 1-octadecanoyl-2-(9Z,12Z-octadecadienoyl)-sn-glycero-3-phosphate + CoA. The enzyme catalyses 1-octadecanoyl-sn-glycero-3-phosphate + (4Z,7Z,10Z,13Z,16Z,19Z)-docosahexaenoyl-CoA = 1-octadecanoyl-2-(4Z,7Z,10Z,13Z,16Z,19Z-docosahexaenoyl)-sn-glycero-3-phosphate + CoA. It catalyses the reaction (4Z,7Z,10Z,13Z,16Z,19Z)-docosahexaenoyl-CoA + 1-(9Z-octadecenoyl)-sn-glycero-3-phosphate = 1-(9Z-octadecenoyl)-2-(4Z,7Z,10Z,13Z,16Z,19Z-docosahexaenoyl)-sn-glycero-3-phosphate + CoA. It functions in the pathway phospholipid metabolism; CDP-diacylglycerol biosynthesis; CDP-diacylglycerol from sn-glycerol 3-phosphate: step 2/3. Converts 1-acyl-sn-glycerol-3-phosphate (lysophosphatidic acid or LPA) into 1,2-diacyl-sn-glycerol-3-phosphate (phosphatidic acid or PA) by incorporating an acyl moiety at the sn-2 position of the glycerol backbone. Exhibits high acyl-CoA specificity for polyunsaturated fatty acyl-CoA, especially docosahexaenoyl-CoA (22:6-CoA, DHA-CoA). In Homo sapiens (Human), this protein is 1-acyl-sn-glycerol-3-phosphate acyltransferase delta (AGPAT4).